The chain runs to 727 residues: LIM domain-binding protein 3 (727 aa).

Residues 1–84 (MSYSVTLTGP…NLSLTLQKSK (84 aa)) enclose the PDZ domain. Phosphoserine is present on residues Ser-44, Ser-121, and Ser-123. The interval 86-197 (PIPISTTAPP…GSSQPRQYNN (112 aa)) is disordered. Residues 140-156 (PTFSPAFSRPSAFSSLA) show a composition bias toward low complexity. Residues 188-197 (GSSQPRQYNN) are compositionally biased toward polar residues. Ser-217 is subject to Phosphoserine. Arg-219 is modified (omega-N-methylarginine). Residue Ser-223 is modified to Phosphoserine. 2 disordered regions span residues 284–440 (TEFM…YTPS) and 472–529 (APSV…PQVP). The span at 312–385 (ATTPLLPASA…SAPATHTSYS (74 aa)) shows a compositional bias: low complexity. Residues 428 to 440 (PYTPSPAPAYTPS) are compositionally biased toward pro residues. Residues 494-513 (DSFSQKFAPGKSTTSISKQT) show a composition bias toward polar residues. 2 positions are modified to omega-N-methylarginine: Arg-516 and Arg-533. LIM zinc-binding domains are found at residues 549–607 (PLCG…QFFA), 608–667 (PLCA…LFST), and 668–727 (KCHG…TINL).

In terms of assembly, interacts via its LIM domains with various PKC isoforms. Interacts via its PDZ domain with the ACTN2 C-terminal region. Interacts with MYOZ1, MYOZ2 and MYOZ3. Expressed primarily in skeletal muscle and to a lesser extent in heart. Also detected in brain and placenta.

It localises to the cytoplasm. The protein resides in the perinuclear region. The protein localises to the cell projection. Its subcellular location is the pseudopodium. It is found in the cytoskeleton. It localises to the myofibril. The protein resides in the sarcomere. The protein localises to the z line. In terms of biological role, may function as an adapter in striated muscle to couple protein kinase C-mediated signaling via its LIM domains to the cytoskeleton. The chain is LIM domain-binding protein 3 from Homo sapiens (Human).